The sequence spans 306 residues: Methionyl-tRNA formyltransferase (306 aa).

110-113 is a binding site for (6S)-5,6,7,8-tetrahydrofolate; it reads SLLP.

Belongs to the Fmt family.

It catalyses the reaction L-methionyl-tRNA(fMet) + (6R)-10-formyltetrahydrofolate = N-formyl-L-methionyl-tRNA(fMet) + (6S)-5,6,7,8-tetrahydrofolate + H(+). In terms of biological role, attaches a formyl group to the free amino group of methionyl-tRNA(fMet). The formyl group appears to play a dual role in the initiator identity of N-formylmethionyl-tRNA by promoting its recognition by IF2 and preventing the misappropriation of this tRNA by the elongation apparatus. In Brucella anthropi (strain ATCC 49188 / DSM 6882 / CCUG 24695 / JCM 21032 / LMG 3331 / NBRC 15819 / NCTC 12168 / Alc 37) (Ochrobactrum anthropi), this protein is Methionyl-tRNA formyltransferase.